The chain runs to 207 residues: Peptidyl-tRNA hydrolase (207 aa).

Residue Tyr15 participates in tRNA binding. His20 (proton acceptor) is an active-site residue. TRNA-binding residues include Phe66, Asn68, and Asn114. A disordered region spans residues 187 to 207; that stretch reads HTTKPPRPKPARPATAESDKG. Low complexity predominate over residues 198 to 207; sequence RPATAESDKG.

The protein belongs to the PTH family. As to quaternary structure, monomer.

The protein localises to the cytoplasm. It catalyses the reaction an N-acyl-L-alpha-aminoacyl-tRNA + H2O = an N-acyl-L-amino acid + a tRNA + H(+). Functionally, hydrolyzes ribosome-free peptidyl-tRNAs (with 1 or more amino acids incorporated), which drop off the ribosome during protein synthesis, or as a result of ribosome stalling. Catalyzes the release of premature peptidyl moieties from peptidyl-tRNA molecules trapped in stalled 50S ribosomal subunits, and thus maintains levels of free tRNAs and 50S ribosomes. The polypeptide is Peptidyl-tRNA hydrolase (Delftia acidovorans (strain DSM 14801 / SPH-1)).